Here is a 234-residue protein sequence, read N- to C-terminus: Enolase-phosphatase E1 (234 aa).

Residues Asp-10 and Glu-12 each coordinate Mg(2+). Substrate-binding positions include 125-126 (SS) and Lys-162. Mg(2+) is bound at residue Asp-188.

The protein belongs to the HAD-like hydrolase superfamily. MasA/MtnC family. In terms of assembly, monomer. The cofactor is Mg(2+).

Its subcellular location is the cytoplasm. It is found in the nucleus. The catalysed reaction is 5-methylsulfanyl-2,3-dioxopentyl phosphate + H2O = 1,2-dihydroxy-5-(methylsulfanyl)pent-1-en-3-one + phosphate. The protein operates within amino-acid biosynthesis; L-methionine biosynthesis via salvage pathway; L-methionine from S-methyl-5-thio-alpha-D-ribose 1-phosphate: step 3/6. Its pathway is amino-acid biosynthesis; L-methionine biosynthesis via salvage pathway; L-methionine from S-methyl-5-thio-alpha-D-ribose 1-phosphate: step 4/6. Functionally, bifunctional enzyme that catalyzes the enolization of 2,3-diketo-5-methylthiopentyl-1-phosphate (DK-MTP-1-P) into the intermediate 2-hydroxy-3-keto-5-methylthiopentenyl-1-phosphate (HK-MTPenyl-1-P), which is then dephosphorylated to form the acireductone 1,2-dihydroxy-3-keto-5-methylthiopentene (DHK-MTPene). In Neurospora crassa (strain ATCC 24698 / 74-OR23-1A / CBS 708.71 / DSM 1257 / FGSC 987), this protein is Enolase-phosphatase E1 (utr4).